The following is a 464-amino-acid chain: METPRLMCTQHPDSTVKVPVQEEVEEAVRSFLVYGCDEVMSDYEGKLTPYAQPKEIVVKAGELGVPVGEGFYVTVRAPNPRLEDFDRVDLALEAAVLANYYSYKRLGVQAVRWVVLPMTDSAETVRLVQRLLARKTRVLCEEVGQPCEQAQLVPLLEDVDSLLRVREILRDLHSALAELGSDPGVLRVFLGKSDSALKAGHIASALSLLYALGESAKAGEELGLEVKPILGGGSPPFRGGVNNPRLVGVEVQRYRGYSTVTVQSAVRYDASFSEYQEVRSKLLGGAGGEPGDAGGRVAELARLAASMYRSLASKYLDFVNEYARSVPTTRDRVSWREYGRALELEDKLFSAPRAIVYTAAWYSLGVPPTFLDADFVLEAYRGDFLDEVLGYLPGLEEEWRYDAQFYLPRLAGERLGEELVKKVDEALDAMGLRPEPLEPYEKLARTAPAELRALLLGKVRGFLG.

The protein belongs to the PEPCase type 2 family. Homotetramer. Requires Mg(2+) as cofactor.

It catalyses the reaction oxaloacetate + phosphate = phosphoenolpyruvate + hydrogencarbonate. Its function is as follows. Catalyzes the irreversible beta-carboxylation of phosphoenolpyruvate (PEP) to form oxaloacetate (OAA), a four-carbon dicarboxylic acid source for the tricarboxylic acid cycle. The chain is Phosphoenolpyruvate carboxylase from Thermofilum pendens (strain DSM 2475 / Hrk 5).